The primary structure comprises 297 residues: ClpXP adapter protein SpxH (297 aa).

Belongs to the SpxH family. As to quaternary structure, interacts with Spx.

Its subcellular location is the cytoplasm. Adapter protein required for efficient degradation of Spx by ClpXP under non-stress conditions. Interaction with Spx stabilizes Spx and exposes the C-terminus of Spx for recognition and proteolysis by ClpXP. This is ClpXP adapter protein SpxH from Bacillus cereus (strain ATCC 14579 / DSM 31 / CCUG 7414 / JCM 2152 / NBRC 15305 / NCIMB 9373 / NCTC 2599 / NRRL B-3711).